Consider the following 410-residue polypeptide: Dephospho-CoA kinase (410 aa).

The DPCK domain occupies 3 to 201 (CIGITGGIGA…HRILPFAYNL (199 aa)). Residue 11-16 (GAGKSL) participates in ATP binding. The segment at 196-410 (PFAYNLSQRQ…EWADSTGWRL (215 aa)) is UPF0157.

The protein in the N-terminal section; belongs to the CoaE family. It in the C-terminal section; belongs to the UPF0157 (GrpB) family.

It localises to the cytoplasm. It carries out the reaction 3'-dephospho-CoA + ATP = ADP + CoA + H(+). The protein operates within cofactor biosynthesis; coenzyme A biosynthesis; CoA from (R)-pantothenate: step 5/5. Catalyzes the phosphorylation of the 3'-hydroxyl group of dephosphocoenzyme A to form coenzyme A. The polypeptide is Dephospho-CoA kinase (Mycobacterium leprae (strain TN)).